The sequence spans 659 residues: Nicastrin (659 aa).

An N-terminal signal peptide occupies residues 1-22 (MKIKNYFIIVFIIIVLSTDVIS). Over 23 to 627 (SQSSIEDKMY…LFQVGSYANE (605 aa)) the chain is Extracellular. N-linked (GlcNAc...) asparagine glycosylation is found at Asn-94, Asn-172, Asn-305, Asn-389, Asn-451, Asn-475, Asn-550, Asn-553, and Asn-600. The chain crosses the membrane as a helical span at residues 628-648 (IWFLVSGLIELLLSVGIIFYI). Over 649–659 (KKYLSKRYKLL) the chain is Cytoplasmic.

This sequence belongs to the nicastrin family. In terms of assembly, homodimer. Component of the gamma-secretase complex, a complex composed of a presenilin homodimer, nicastrin, aph1 and pen2.

The protein localises to the membrane. Its function is as follows. Essential subunit of the gamma-secretase complex, an endoprotease complex that catalyzes the intramembrane cleavage of integral membrane proteins such as Notch receptors and APP (amyloid-beta precursor protein). It probably represents a stabilizing cofactor required for the assembly of the gamma-secretase complex. This Dictyostelium discoideum (Social amoeba) protein is Nicastrin (ncstn).